Reading from the N-terminus, the 715-residue chain is Methionine--tRNA ligase (715 aa).

Positions Pro17–His27 match the 'HIGH' region motif. The Zn(2+) site is built by Cys148, Cys151, Cys161, and Cys164. Residues Lys359–Ser363 carry the 'KMSKS' region motif. Lys362 serves as a coordination point for ATP. Residues Asp614 to Lys715 form the tRNA-binding domain.

It belongs to the class-I aminoacyl-tRNA synthetase family. MetG type 1 subfamily. As to quaternary structure, homodimer. The cofactor is Zn(2+).

The protein resides in the cytoplasm. It catalyses the reaction tRNA(Met) + L-methionine + ATP = L-methionyl-tRNA(Met) + AMP + diphosphate. In terms of biological role, is required not only for elongation of protein synthesis but also for the initiation of all mRNA translation through initiator tRNA(fMet) aminoacylation. The chain is Methionine--tRNA ligase from Leptospira interrogans serogroup Icterohaemorrhagiae serovar copenhageni (strain Fiocruz L1-130).